A 113-amino-acid chain; its full sequence is Carboxysome shell protein CcmK4 (113 aa).

One can recognise a BMC domain in the interval 5 to 91; it reads AIGSLETKGF…PHENVEAVFP (87 aa).

The protein belongs to the bacterial microcompartments protein family. CcmK subfamily. In terms of assembly, homohexamer. Interacts stably with CcmK3, probably forms heterohexamers with a 1:2 CcmK3:CcmK4 stoichiometry.

It is found in the carboxysome. One of the shell proteins of the carboxysome, a polyhedral inclusion where RuBisCO (ribulose bisphosphate carboxylase, rbcL-rbcS) is sequestered. Assembles into hexamers which make sheets that form the facets of the polyhedral carboxysome. The hexamer central pore probably regulates metabolite flux. In terms of biological role, a minor shell protein of the carboxysome, a polyhedral inclusion where RuBisCO (ribulose bisphosphate carboxylase, rbcL-rbcS) is sequestered. Hexamers form sheets that form the facets of the polyhedral carboxysome. The shell is 4.5 nm thick, as observed for CcmK proteins. In PCC 7942 there are several CcmK paralogs with presumably functional differences; replacing the central pore residues (34-37) with those of CcmK2 from this organism (Tyr-Glu-Lys-Ile) allows the bacterium to make carboxysomes, but the expression level is too low to know if the carboxysome is functional for CO(2) fixation. This subunit probably makes both homohexamers and heterohexamers with CcmK3. The CcmK3-CcmK4 heterohexmers have been suggested to cap other hexamers, perhaps to alter metabolite flux. This chain is Carboxysome shell protein CcmK4, found in Synechococcus elongatus (strain ATCC 33912 / PCC 7942 / FACHB-805) (Anacystis nidulans R2).